Consider the following 346-residue polypeptide: Phenylalanine--tRNA ligase alpha subunit (346 aa).

E261 is a binding site for Mg(2+).

Belongs to the class-II aminoacyl-tRNA synthetase family. Phe-tRNA synthetase alpha subunit type 1 subfamily. As to quaternary structure, tetramer of two alpha and two beta subunits. Requires Mg(2+) as cofactor.

It localises to the cytoplasm. It carries out the reaction tRNA(Phe) + L-phenylalanine + ATP = L-phenylalanyl-tRNA(Phe) + AMP + diphosphate + H(+). The polypeptide is Phenylalanine--tRNA ligase alpha subunit (Streptococcus agalactiae serotype Ia (strain ATCC 27591 / A909 / CDC SS700)).